The following is a 205-amino-acid chain: Large ribosomal subunit protein uL4 (205 aa).

A disordered region spans residues Lys44–Ser77. A compositionally biased stretch (basic residues) spans Val51–Gly71.

The protein belongs to the universal ribosomal protein uL4 family. In terms of assembly, part of the 50S ribosomal subunit.

Functionally, one of the primary rRNA binding proteins, this protein initially binds near the 5'-end of the 23S rRNA. It is important during the early stages of 50S assembly. It makes multiple contacts with different domains of the 23S rRNA in the assembled 50S subunit and ribosome. In terms of biological role, forms part of the polypeptide exit tunnel. This chain is Large ribosomal subunit protein uL4, found in Lactobacillus delbrueckii subsp. bulgaricus (strain ATCC 11842 / DSM 20081 / BCRC 10696 / JCM 1002 / NBRC 13953 / NCIMB 11778 / NCTC 12712 / WDCM 00102 / Lb 14).